The following is a 598-amino-acid chain: MNELIKHKLELLPDSPGCYLHKDKEGTIIYVGKAKNLKKRVRSYFRGSHDTKTELLVSEIVDFEYIVTESDTEALLLEINLIQKNMPKYNIKLKDDKSYPFLKITNESFPRLVITRYIKKNDGLYFGPYPDSYTANEVKKLLDRIFPFKKCKNPINKVCFYYHLGQCCAHTICHTDKAYWDRLIDDVKHFLNGKDDKIIEDLRSKMLAASKEMAFERAAEYRDLISGIATMRTKQRVMSKDLQDRDIFGYYVDKGWMCVQVFFVRQGKLIQRDVNLFPYYTDAEEDFLTYMGQFYQDKQHFIPKEVFIPEAIDEELVAAIVPTKIIKPKRGEKKQLVALATKNARVSLQQKFDLLEKDIKKTSGAIENLGQLLRIDKPVRIEAFDNSNIQGTSPVAAMVVFVDGKPSKKDYRKFKIKTVVGPDDYASMREVLFRRYSRVKKEGLQAPNLIIVDGGVGQVNVAKDVIEKQLGLTIPVAGLQKNDKHQTHDLLFGNPLEVVPLPRRSEEFFLLHRIQDEVHRFAVTFHRQVRRKNSFSSTLDHISGLGPKRKQLLLRHFKTITAIASATSEEIQALGIPKTVVEAIQQQITDNKNDRSSP.

Residues 14 to 91 (DSPGCYLHKD…IQKNMPKYNI (78 aa)) form the GIY-YIG domain. The 36-residue stretch at 196-231 (DKIIEDLRSKMLAASKEMAFERAAEYRDLISGIATM) folds into the UVR domain.

It belongs to the UvrC family. In terms of assembly, interacts with UvrB in an incision complex.

It localises to the cytoplasm. In terms of biological role, the UvrABC repair system catalyzes the recognition and processing of DNA lesions. UvrC both incises the 5' and 3' sides of the lesion. The N-terminal half is responsible for the 3' incision and the C-terminal half is responsible for the 5' incision. The protein is UvrABC system protein C of Streptococcus pyogenes serotype M1.